The chain runs to 196 residues: MADS-box transcription factor 32 (196 aa).

The region spanning 1-61 is the MADS-box domain; that stretch reads MGRGRSEIKR…GKLYHFLSPT (61 aa). The K-box domain maps to 85–175; sequence RQERRAELEK…CDKIAHAQTL (91 aa).

It localises to the nucleus. Its function is as follows. Probable transcription factor. The protein is MADS-box transcription factor 32 (MADS32) of Oryza sativa subsp. japonica (Rice).